Here is a 354-residue protein sequence, read N- to C-terminus: Guanine nucleotide-binding protein G(i) subunit alpha-3 (354 aa).

Gly-2 is lipidated: N-myristoyl glycine. The S-palmitoyl cysteine moiety is linked to residue Cys-3. One can recognise a G-alpha domain in the interval 32–354 (KEVKLLLLGA…KNNLKECGLY (323 aa)). The interval 35–48 (KLLLLGAGESGKST) is G1 motif. Positions 42, 43, 44, 45, 46, 47, 48, 150, 151, 175, 176, 177, 178, 179, 180, 181, 201, 203, 269, 270, 272, 273, 325, 326, and 327 each coordinate GTP. A Mg(2+)-binding site is contributed by Ser-47. The G2 motif stretch occupies residues 173–181 (DVLRTRVKT). Thr-181 contacts Mg(2+). Positions 196–205 (FKMFDVGGQR) are G3 motif. The interval 265–272 (ILFLNKKD) is G4 motif. Positions 324–329 (TCATDT) are G5 motif.

Belongs to the G-alpha family. G(i/o/t/z) subfamily. Heterotrimeric G proteins are composed of 3 units; alpha, beta and gamma. The alpha subunit contains the guanine nucleotide binding site. GTP binding causes dissociation of the heterotrimer, liberating the individual subunits so that they can interact with downstream effector proteins. Forms a complex with CCDC88A/GIV and EGFR which leads to enhanced EGFR signaling and triggering of cell migration; ligand stimulation is required for recruitment of GNAI3 to the complex. Interacts (inactive GDP-bound form) with CCDC88A/GIV (via GBA motif); the interaction leads to activation of GNAI3. Interacts (inactive GDP-bound form) with CCDC88C/DAPLE (via GBA motif); the interaction leads to activation of GNAI3. Interacts (inactive GDP-bound form) with NUCB1 (via GBA motif) and NUCB2 (via GBA motif); the interaction leads to activation of GNAI3. Interacts (inactive GDP-bound form) with PLCD4 (via GBA motif); the interaction leads to activation of GNAI3. Interacts with INSR; the interaction is probably mediated by CCDC88A/GIV. Interacts with GPSM1. Interacts (GDP-bound form) with GPSM2 (via GoLoco domains). Does not interact with RGS2. Interacts with RGS8 and RGS10; this strongly enhances the intrinsic GTPase activity. Interacts with RGS12. Interacts with RGS16; this strongly enhances the intrinsic GTPase activity. Interacts (via active GTP- or inactive GDP-bound form) with RGS14. Interacts (via active GTP-bound form) with TRPC5 (via ANK repeats) in a homotetrameric ion channel; the interaction is direct and activates the channel activity. In terms of tissue distribution, ubiquitous.

The protein resides in the cytoplasm. It localises to the cell membrane. The protein localises to the cytoskeleton. It is found in the microtubule organizing center. Its subcellular location is the centrosome. Its function is as follows. Heterotrimeric guanine nucleotide-binding proteins (G proteins) function as transducers downstream of G protein-coupled receptors (GPCRs) in numerous signaling cascades. The alpha chain contains the guanine nucleotide binding site and alternates between an active, GTP-bound state and an inactive, GDP-bound state. Signaling by an activated GPCR promotes GDP release and GTP binding. The alpha subunit has a low GTPase activity that converts bound GTP to GDP, thereby terminating the signal. Both GDP release and GTP hydrolysis are modulated by numerous regulatory proteins. Signaling is mediated via effector proteins, such as adenylate cyclase. Inhibits adenylate cyclase activity, leading to decreased intracellular cAMP levels. Stimulates the activity of receptor-regulated K(+) channels. The active GTP-bound form prevents the association of RGS14 with centrosomes and is required for the translocation of RGS14 from the cytoplasm to the plasma membrane. May play a role in cell division. The active GTP-bound form activates the calcium permeant TRPC5 ion channels. The polypeptide is Guanine nucleotide-binding protein G(i) subunit alpha-3 (Gnai3) (Rattus norvegicus (Rat)).